Consider the following 309-residue polypeptide: Aspartate carbamoyltransferase catalytic subunit (309 aa).

The carbamoyl phosphate site is built by R55 and T56. K85 lines the L-aspartate pocket. 3 residues coordinate carbamoyl phosphate: R106, H135, and Q138. R168 and R230 together coordinate L-aspartate. Residues L268 and P269 each contribute to the carbamoyl phosphate site.

This sequence belongs to the aspartate/ornithine carbamoyltransferase superfamily. ATCase family. As to quaternary structure, heterododecamer (2C3:3R2) of six catalytic PyrB chains organized as two trimers (C3), and six regulatory PyrI chains organized as three dimers (R2).

The catalysed reaction is carbamoyl phosphate + L-aspartate = N-carbamoyl-L-aspartate + phosphate + H(+). It participates in pyrimidine metabolism; UMP biosynthesis via de novo pathway; (S)-dihydroorotate from bicarbonate: step 2/3. Functionally, catalyzes the condensation of carbamoyl phosphate and aspartate to form carbamoyl aspartate and inorganic phosphate, the committed step in the de novo pyrimidine nucleotide biosynthesis pathway. This Vibrio cholerae serotype O1 (strain ATCC 39315 / El Tor Inaba N16961) protein is Aspartate carbamoyltransferase catalytic subunit.